Reading from the N-terminus, the 332-residue chain is GTP 3',8-cyclase (332 aa).

The 215-residue stretch at 7-221 (SYDRLHDYVR…FDTCKDNGLA (215 aa)) folds into the Radical SAM core domain. Residue Arg16 coordinates GTP. 2 residues coordinate [4Fe-4S] cluster: Cys23 and Cys27. An S-adenosyl-L-methionine-binding site is contributed by Tyr29. Cys30 serves as a coordination point for [4Fe-4S] cluster. Arg66 provides a ligand contact to GTP. Gly70 is an S-adenosyl-L-methionine binding site. Thr97 contacts GTP. Ser121 serves as a coordination point for S-adenosyl-L-methionine. Position 158 (Lys158) interacts with GTP. Met192 is an S-adenosyl-L-methionine binding site. [4Fe-4S] cluster is bound by residues Cys256 and Cys259. 261–263 (RLR) is a GTP binding site. Residue Cys273 participates in [4Fe-4S] cluster binding.

It belongs to the radical SAM superfamily. MoaA family. In terms of assembly, monomer and homodimer. [4Fe-4S] cluster is required as a cofactor.

It carries out the reaction GTP + AH2 + S-adenosyl-L-methionine = (8S)-3',8-cyclo-7,8-dihydroguanosine 5'-triphosphate + 5'-deoxyadenosine + L-methionine + A + H(+). It participates in cofactor biosynthesis; molybdopterin biosynthesis. Its function is as follows. Catalyzes the cyclization of GTP to (8S)-3',8-cyclo-7,8-dihydroguanosine 5'-triphosphate. The sequence is that of GTP 3',8-cyclase from Lactiplantibacillus plantarum (strain ATCC BAA-793 / NCIMB 8826 / WCFS1) (Lactobacillus plantarum).